The following is a 401-amino-acid chain: Tumor necrosis factor receptor superfamily member 11B (401 aa).

The N-terminal stretch at 1–21 is a signal peptide; that stretch reads MNKWLCCALLVLLDIIEWTTQ. TNFR-Cys repeat units lie at residues 24 to 62, 65 to 105, 107 to 142, and 145 to 185; these read LPPK…KTLC, CPDH…NRVC, CEEG…NTVC, and CPDG…DNVC. Cystine bridges form between Cys-41–Cys-54, Cys-44–Cys-62, Cys-65–Cys-80, Cys-83–Cys-97, Cys-87–Cys-105, Cys-107–Cys-118, Cys-124–Cys-142, and Cys-145–Cys-160. Residue Asn-98 is glycosylated (N-linked (GlcNAc...) asparagine). Asn-165 and Asn-178 each carry an N-linked (GlcNAc...) asparagine glycan. A disulfide bond links Cys-166 and Cys-185. Death domains lie at 198 to 269 and 283 to 365; these read DVTL…MVKK and RHLG…THSL. Asn-289 is a glycosylation site (N-linked (GlcNAc...) asparagine).

As to quaternary structure, homodimer. Interacts with TNFSF10 and TNFSF11. Highly expressed in liver, lung, stomach, intestines and calvaria. Highly expressed in decidua and placenta, and in embryo.

Its subcellular location is the secreted. Acts as a decoy receptor for TNFSF11/RANKL and thereby neutralizes its function in osteoclastogenesis. Inhibits the activation of osteoclasts and promotes osteoclast apoptosis in vitro. Bone homeostasis seems to depend on the local ratio between TNFSF11 and TNFRSF11B. May also play a role in preventing arterial calcification. May act as decoy receptor for TNFSF10/TRAIL and protect against apoptosis. TNFSF10/TRAIL binding blocks the inhibition of osteoclastogenesis. This Mus musculus (Mouse) protein is Tumor necrosis factor receptor superfamily member 11B (Tnfrsf11b).